Consider the following 165-residue polypeptide: Chorismate pyruvate-lyase (165 aa).

Substrate is bound by residues Met35, Arg77, Leu115, and Glu156.

The protein belongs to the UbiC family. Monomer.

The protein localises to the cytoplasm. The catalysed reaction is chorismate = 4-hydroxybenzoate + pyruvate. The protein operates within cofactor biosynthesis; ubiquinone biosynthesis. Removes the pyruvyl group from chorismate, with concomitant aromatization of the ring, to provide 4-hydroxybenzoate (4HB) for the ubiquinone pathway. In Escherichia coli O157:H7, this protein is Chorismate pyruvate-lyase.